The chain runs to 116 residues: Probable transcriptional regulator WhiB6 (116 aa).

[4Fe-4S] cluster-binding residues include C12, C53, C56, and C62. The 4Fe-4S Wbl-type domain maps to 33 to 86 (VCTQDPDRWTTTPDDEAKTLCRACPRRWLCARDAVESAGAEGLWAGVVIPESGR).

The protein belongs to the WhiB family. It depends on [4Fe-4S] cluster as a cofactor. In terms of processing, the Fe-S cluster can be nitrosylated by nitric oxide (NO). Post-translationally, upon Fe-S cluster removal intramolecular disulfide bonds are formed.

It is found in the cytoplasm. Functionally, acts as a transcriptional regulator. Probably redox-responsive. The apo- but not holo-form probably binds DNA. In Mycobacterium tuberculosis (strain CDC 1551 / Oshkosh), this protein is Probable transcriptional regulator WhiB6 (whiB6).